The primary structure comprises 485 residues: UDP-N-acetylmuramate--L-alanine ligase (485 aa).

125 to 131 provides a ligand contact to ATP; that stretch reads GTHGKTT.

It belongs to the MurCDEF family.

Its subcellular location is the cytoplasm. It carries out the reaction UDP-N-acetyl-alpha-D-muramate + L-alanine + ATP = UDP-N-acetyl-alpha-D-muramoyl-L-alanine + ADP + phosphate + H(+). The protein operates within cell wall biogenesis; peptidoglycan biosynthesis. Functionally, cell wall formation. In Stutzerimonas stutzeri (strain A1501) (Pseudomonas stutzeri), this protein is UDP-N-acetylmuramate--L-alanine ligase.